The following is a 64-amino-acid chain: Large ribosomal subunit protein eL37 (64 aa).

Zn(2+) contacts are provided by C20, C23, C35, and C38. A C4-type zinc finger spans residues 20–38; it reads CRRCGRRAFHVRKKVCAAC.

The protein belongs to the eukaryotic ribosomal protein eL37 family. The cofactor is Zn(2+).

Its function is as follows. Binds to the 23S rRNA. The protein is Large ribosomal subunit protein eL37 of Methanococcus maripaludis (strain C6 / ATCC BAA-1332).